Reading from the N-terminus, the 227-residue chain is DNA repair protein RecO (227 aa).

Belongs to the RecO family.

In terms of biological role, involved in DNA repair and RecF pathway recombination. This is DNA repair protein RecO from Pseudomonas savastanoi pv. phaseolicola (strain 1448A / Race 6) (Pseudomonas syringae pv. phaseolicola (strain 1448A / Race 6)).